An 85-amino-acid polypeptide reads, in one-letter code: Putative membrane protein insertion efficiency factor (85 aa).

This sequence belongs to the UPF0161 family.

Its subcellular location is the cell inner membrane. In terms of biological role, could be involved in insertion of integral membrane proteins into the membrane. This chain is Putative membrane protein insertion efficiency factor, found in Escherichia fergusonii (strain ATCC 35469 / DSM 13698 / CCUG 18766 / IAM 14443 / JCM 21226 / LMG 7866 / NBRC 102419 / NCTC 12128 / CDC 0568-73).